The primary structure comprises 278 residues: HTH-type transcriptional activator RhaS (278 aa).

The region spanning asparagine 174 to glycine 272 is the HTH araC/xylS-type domain. 2 consecutive DNA-binding regions (H-T-H motif) follow at residues aspartate 191 to threonine 212 and valine 239 to phenylalanine 262.

As to quaternary structure, binds DNA as a dimer.

It is found in the cytoplasm. In terms of biological role, activates expression of the rhaBAD and rhaT operons. This is HTH-type transcriptional activator RhaS from Escherichia coli O157:H7.